A 560-amino-acid chain; its full sequence is Putative transport protein ESA_02488 (560 aa).

The next 5 helical transmembrane spans lie at 8 to 28, 32 to 52, 66 to 86, 91 to 111, and 158 to 178; these read LLNGNYILLLFVVLALGLCLG, LGSVQLGNSIGVLVVSLLLGQ, FMLFIFCVGVEAGPNFFSIFF, NYLMLALVMVGSALLIALGLG, and HLSLGYALTYLIGLVSLIFGA. RCK C-terminal domains follow at residues 200–288 and 292–373; these read RGLD…SFRN and VFDR…RIGF. A run of 5 helical transmembrane segments spans residues 383-403, 406-426, 447-467, 475-495, and 539-559; these read LLAFCAFFIVGLMIGMITFQF, FSFGIGNAAGLLFAGIMLGFL, FGLMVFMAGVGLSAGSGIGHG, MLFAGLIVSLLPVVICFLFGA, and YAIANVLLTLAGTLIVIIWPG.

This sequence belongs to the AAE transporter (TC 2.A.81) family. YbjL subfamily.

Its subcellular location is the cell membrane. The polypeptide is Putative transport protein ESA_02488 (Cronobacter sakazakii (strain ATCC BAA-894) (Enterobacter sakazakii)).